A 54-amino-acid polypeptide reads, in one-letter code: Pars intercerebralis major peptide D1 (54 aa).

It belongs to the granulin family. Six disulfide bonds are present. As to expression, brain.

It is found in the secreted. This is Pars intercerebralis major peptide D1 from Locusta migratoria (Migratory locust).